The primary structure comprises 41 residues: Large ribosomal subunit protein bL36 (41 aa).

Belongs to the bacterial ribosomal protein bL36 family.

This chain is Large ribosomal subunit protein bL36, found in Beijerinckia indica subsp. indica (strain ATCC 9039 / DSM 1715 / NCIMB 8712).